We begin with the raw amino-acid sequence, 173 residues long: Calcineurin subunit B (173 aa).

EF-hand domains are found at residues 20-55, 59-87, 89-124, and 130-165; these read DEID…AANP, RLMD…FSTK, NKKE…MVGN, and QLQQ…TNVY. D33, D35, S37, E44, D65, N67, S69, D71, E76, D102, D104, D106, Y108, E113, D143, D145, D147, K149, and E154 together coordinate Ca(2+).

Belongs to the calcineurin regulatory subunit family. Composed of a catalytic subunit (A) and a regulatory subunit (B).

In terms of biological role, regulatory subunit of calcineurin, a calcium-dependent, calmodulin stimulated protein phosphatase. Confers calcium sensitivity. The polypeptide is Calcineurin subunit B (CNB1) (Yarrowia lipolytica (strain CLIB 122 / E 150) (Yeast)).